We begin with the raw amino-acid sequence, 101 residues long: Urease subunit beta (101 aa).

It belongs to the urease beta subunit family. As to quaternary structure, heterotrimer of UreA (gamma), UreB (beta) and UreC (alpha) subunits. Three heterotrimers associate to form the active enzyme.

Its subcellular location is the cytoplasm. It catalyses the reaction urea + 2 H2O + H(+) = hydrogencarbonate + 2 NH4(+). It functions in the pathway nitrogen metabolism; urea degradation; CO(2) and NH(3) from urea (urease route): step 1/1. The polypeptide is Urease subunit beta (Dechloromonas aromatica (strain RCB)).